Consider the following 529-residue polypeptide: Mitochondrial inner membrane magnesium transporter MIT1 (529 aa).

2 coiled-coil regions span residues 336-388 (KIQL…LKNE) and 416-450 (LLETHLQLTDELSGELENMEEKITHYEELMRLNLD). Residues 456 to 476 (FILLNAKISFSTLFCSICAVI) form a helical membrane-spanning segment. Residues 477–492 (TSLFGMNLKNFIEHND) lie on the Mitochondrial intermembrane side of the membrane. Residues 493–513 (YAFFIVSIFITSWSIVGIYFT) form a helical membrane-spanning segment. Residues 514–529 (KNINTLLRFFDKYNVK) lie on the Mitochondrial matrix side of the membrane.

Belongs to the CorA metal ion transporter (MIT) (TC 1.A.35) family.

Its subcellular location is the mitochondrion inner membrane. Functionally, mitochondrial inner membrane magnesium transporter required for mitochondrial magnesium homeostasis. Involved in the development of the sporozoite in the mosquito vector midgut. The polypeptide is Mitochondrial inner membrane magnesium transporter MIT1 (Plasmodium falciparum (isolate 3D7)).